Reading from the N-terminus, the 457-residue chain is tRNA modification GTPase MnmE (457 aa).

(6S)-5-formyl-5,6,7,8-tetrahydrofolate contacts are provided by arginine 23, glutamate 86, and arginine 125. Residues 221–377 form the TrmE-type G domain; that stretch reads GVSVLIAGKP…LREAVFETFI (157 aa). Asparagine 231 serves as a coordination point for K(+). GTP-binding positions include 231–236, 250–256, and 275–278; these read NVGKSS, TSVPGTT, and DTAG. Serine 235 serves as a coordination point for Mg(2+). Residues threonine 250, valine 252, and threonine 255 each coordinate K(+). Residue threonine 256 coordinates Mg(2+). Lysine 457 is a binding site for (6S)-5-formyl-5,6,7,8-tetrahydrofolate.

The protein belongs to the TRAFAC class TrmE-Era-EngA-EngB-Septin-like GTPase superfamily. TrmE GTPase family. In terms of assembly, homodimer. Heterotetramer of two MnmE and two MnmG subunits. K(+) serves as cofactor.

The protein localises to the cytoplasm. Exhibits a very high intrinsic GTPase hydrolysis rate. Involved in the addition of a carboxymethylaminomethyl (cmnm) group at the wobble position (U34) of certain tRNAs, forming tRNA-cmnm(5)s(2)U34. The chain is tRNA modification GTPase MnmE from Geobacter metallireducens (strain ATCC 53774 / DSM 7210 / GS-15).